The primary structure comprises 71 residues: Translation initiation factor IF-1 (71 aa).

The 71-residue stretch at 1–71 folds into the S1-like domain; the sequence is MSKDDLIQFT…LTKGRVIHRH (71 aa).

The protein belongs to the IF-1 family. Component of the 30S ribosomal translation pre-initiation complex which assembles on the 30S ribosome in the order IF-2 and IF-3, IF-1 and N-formylmethionyl-tRNA(fMet); mRNA recruitment can occur at any time during PIC assembly.

The protein localises to the cytoplasm. In terms of biological role, one of the essential components for the initiation of protein synthesis. Stabilizes the binding of IF-2 and IF-3 on the 30S subunit to which N-formylmethionyl-tRNA(fMet) subsequently binds. Helps modulate mRNA selection, yielding the 30S pre-initiation complex (PIC). Upon addition of the 50S ribosomal subunit IF-1, IF-2 and IF-3 are released leaving the mature 70S translation initiation complex. This chain is Translation initiation factor IF-1, found in Rickettsia felis (strain ATCC VR-1525 / URRWXCal2) (Rickettsia azadi).